Here is a 209-residue protein sequence, read N- to C-terminus: MARYCGPKNRIARRFGANIFGRGRNPLLRKPNPPGQHGMQRKKKSDYGLQLEEKQKLKACYGMILEKQLVKAYKEVVNKQGNVAQMFLEKFECRLDSIVYRLGFAKTIFAAQQLVSHGHVLVNGKKVDRRSFFVRPGMQISLKEKSKRLAIVTESLENKDQSSLPAYLSLDKAAFKGELVVAPELDQIASQLPLPVNVSVICEFLSHRT.

The segment at 22–45 is disordered; sequence RGRNPLLRKPNPPGQHGMQRKKKS. Residues 93–154 enclose the S4 RNA-binding domain; it reads CRLDSIVYRL…KSKRLAIVTE (62 aa).

It belongs to the universal ribosomal protein uS4 family. Part of the 30S ribosomal subunit. Contacts protein S5. The interaction surface between S4 and S5 is involved in control of translational fidelity.

One of the primary rRNA binding proteins, it binds directly to 16S rRNA where it nucleates assembly of the body of the 30S subunit. Its function is as follows. With S5 and S12 plays an important role in translational accuracy. This Chlamydia trachomatis serovar L2 (strain ATCC VR-902B / DSM 19102 / 434/Bu) protein is Small ribosomal subunit protein uS4.